Consider the following 231-residue polypeptide: Nucleoside diphosphate kinase II, chloroplastic (231 aa).

A chloroplast-targeting transit peptide spans 1 to 62 (MVGATVVSKW…RNSASRRRLR (62 aa)). Positions 91, 139, 167, 173, 184, and 194 each coordinate ATP. The active-site Pros-phosphohistidine intermediate is H197.

The protein belongs to the NDK family. As to quaternary structure, interacts with PHYA, MPK3 and MPK6. It depends on Mg(2+) as a cofactor. Autophosphorylated.

The protein localises to the plastid. The protein resides in the chloroplast. The enzyme catalyses a 2'-deoxyribonucleoside 5'-diphosphate + ATP = a 2'-deoxyribonucleoside 5'-triphosphate + ADP. The catalysed reaction is a ribonucleoside 5'-diphosphate + ATP = a ribonucleoside 5'-triphosphate + ADP. Functionally, major role in the synthesis of nucleoside triphosphates other than ATP. The ATP gamma phosphate is transferred to the NDP beta phosphate via a ping-pong mechanism, using a phosphorylated active-site intermediate. May activate MPK3 and MPK6. May be involved in the regulation of cellular redox state and hydrogen peroxide-mediated MAP kinase signaling. This Arabidopsis thaliana (Mouse-ear cress) protein is Nucleoside diphosphate kinase II, chloroplastic (NDPK2).